The sequence spans 588 residues: Snake venom 5'-nucleotidase (588 aa).

The N-terminal stretch at 1-40 (MQTPKRRRGAQGCPRSSPSPPLLLLVGAVWFCAALSVAAG) is a signal peptide. Zn(2+) contacts are provided by Asp51 and His53. Cys66 and Cys71 form a disulfide bridge. The N-linked (GlcNAc...) asparagine glycan is linked to Asn88. Zn(2+) is bound by residues Asp99 and Asn131. Residue Asn167 is glycosylated (N-linked (GlcNAc...) asparagine). Zn(2+)-binding residues include His234 and His257. N-linked (GlcNAc...) asparagine glycans are attached at residues Asn327, Asn347, and Asn361. Cystine bridges form between Cys367/Cys372 and Cys379/Cys401. Arg368 serves as a coordination point for AMP. The AMP site is built by Asn404 and Arg409. N-linked (GlcNAc...) asparagine glycosylation is present at Asn418. Phe432 is an AMP binding site. Residues Cys491 and Cys494 are joined by a disulfide bond. AMP contacts are provided by Phe515 and Asp521. N-linked (GlcNAc...) asparagine glycosylation occurs at Asn532. Ser564 is lipidated: GPI-anchor amidated serine. Residues 565-588 (AGTLFQAQLFLTWGLCISLLYFIL) constitute a propeptide, removed in mature form.

Belongs to the 5'-nucleotidase family. The cofactor is Zn(2+). Post-translationally, venom 5'-nucleotidases (or a part thereof) may be released into the venom via exosome-like vesicles. They may be attached via a GPI anchor to the membrane of these vesicles. Soluble forms of 5'-nucleotidase might be released by cleavage of the ectodomain in the exosome-like vesicles or venom gland cells. In terms of tissue distribution, expressed by the venom gland.

It localises to the membrane. It catalyses the reaction a ribonucleoside 5'-phosphate + H2O = a ribonucleoside + phosphate. Its function is as follows. Hydrolyzes nucleotides into nucleosides. Snake venom 5'-nucleotidases are widely distributed among venomous snake taxa, but there is a lack of information about their biological activities. They have been shown to inhibit platelet aggregation. This effect may be due to the liberation of inhibitory AMP or adenosine by its action on ADP released upon initiation of aggregation. Venom 5'-nucleotidases are also known to synergistically act in vivo with other toxins like ADPases, phospholipases, and disintegrins to exert a more pronounced anti-coagulant effect. The protein is Snake venom 5'-nucleotidase of Gloydius brevicauda (Korean slamosa snake).